The following is an 860-amino-acid chain: DNA primase (860 aa).

Residues 804-842 form a CHC2-type zinc finger; that stretch reads CLNRQHRGNRDNVLVYIQLKADGNRLILILWSTCFATKC.

This sequence belongs to the herpesviridae DNA primase family. In terms of assembly, associates with the helicase and the primase-associated factor to form the helicase-primase factor.

The protein resides in the host nucleus. Its function is as follows. Essential component of the helicase/primase complex. Unwinds the DNA at the replication forks and generates single-stranded DNA for both leading and lagging strand synthesis. The primase initiates primer synthesis and thereby produces large amount of short RNA primers on the lagging strand that the polymerase elongates using dNTPs. The chain is DNA primase (U43) from Homo sapiens (Human).